The chain runs to 339 residues: Geranylgeranyl transferase type-2 subunit beta (339 aa).

Phosphothreonine is present on Thr11. 6 PFTB repeats span residues 28–69, 76–117, 124–165, 172–213, 220–261, and 268–310; these read LEKH…DLMG, REEI…TLYD, VDKV…ALLG, VEKA…AITS, SDLL…KIIG, and REKL…SLLG. Residues 198–200 and 240–243 each bind geranylgeranyl diphosphate; these read HAG and RPEK. Residues Asp246 and Cys248 each contribute to the Zn(2+) site. Geranylgeranyl diphosphate contacts are provided by residues Tyr249 and 249–252; that span reads YSWW. Position 298 (His298) interacts with Zn(2+).

It belongs to the protein prenyltransferase subunit beta family. Heterotrimer composed of RABGGTA, RABGGTB and CHM; within this trimer, RABGGTA and RABGGTB form the catalytic component B, while CHM (component A) mediates peptide substrate binding. The Rab GGTase dimer (RGGT) interacts with CHM (component A) prior to Rab protein binding; the association is stabilized by geranylgeranyl pyrophosphate (GGpp). The CHM:RGGT:Rab complex is destabilized by GGpp. Interaction of RABGGTB with prenylated PTP4A2 precludes its association with RABGGTA and inhibits enzyme activity. Interacts with CHODL. Interacts with non-phosphorylated form of RAB8A; phosphorylation of RAB8A at 'Thr-72' disrupts this interaction. It depends on Zn(2+) as a cofactor. In terms of tissue distribution, ubiquitous. Detected in all the major organs in adult animals.

It catalyses the reaction geranylgeranyl diphosphate + L-cysteinyl-[protein] = S-geranylgeranyl-L-cysteinyl-[protein] + diphosphate. The enzymatic reaction requires the aid of a Rab escort protein (also called component A), such as CHM. In terms of biological role, catalyzes the transfer of a geranylgeranyl moiety from geranylgeranyl diphosphate to both cysteines of Rab proteins with the C-terminal sequence -XXCC, -XCXC and -CCXX, such as RAB1A, RAB3A, RAB5A and RAB7A. The protein is Geranylgeranyl transferase type-2 subunit beta (Rabggtb) of Mus musculus (Mouse).